A 251-amino-acid chain; its full sequence is Hydroxyacylglutathione hydrolase (251 aa).

7 residues coordinate Zn(2+): His53, His55, Asp57, His58, His110, Asp127, and His165.

This sequence belongs to the metallo-beta-lactamase superfamily. Glyoxalase II family. Monomer. Zn(2+) serves as cofactor.

The enzyme catalyses an S-(2-hydroxyacyl)glutathione + H2O = a 2-hydroxy carboxylate + glutathione + H(+). Its pathway is secondary metabolite metabolism; methylglyoxal degradation; (R)-lactate from methylglyoxal: step 2/2. Functionally, thiolesterase that catalyzes the hydrolysis of S-D-lactoyl-glutathione to form glutathione and D-lactic acid. This Shigella dysenteriae serotype 1 (strain Sd197) protein is Hydroxyacylglutathione hydrolase.